A 364-amino-acid chain; its full sequence is Chaperone protein DnaJ 1 (364 aa).

Positions 7 to 71 (DYYEILGVNR…ERRSEYDAIL (65 aa)) constitute a J domain. The CR-type zinc-finger motif lies at 124-200 (GCEKEIIYSR…CYGRGRVSAQ (77 aa)). Zn(2+) contacts are provided by C137, C140, C154, C157, C174, C177, C188, and C191. CXXCXGXG motif repeat units lie at residues 137–144 (CPVCEGMG), 154–161 (CHACNGEG), 174–181 (CSVCKGKG), and 188–195 (CPTCYGRG).

It belongs to the DnaJ family. Homodimer. Zn(2+) is required as a cofactor.

Its subcellular location is the cytoplasm. Its function is as follows. Participates actively in the response to hyperosmotic and heat shock by preventing the aggregation of stress-denatured proteins and by disaggregating proteins, also in an autonomous, DnaK-independent fashion. Unfolded proteins bind initially to DnaJ; upon interaction with the DnaJ-bound protein, DnaK hydrolyzes its bound ATP, resulting in the formation of a stable complex. GrpE releases ADP from DnaK; ATP binding to DnaK triggers the release of the substrate protein, thus completing the reaction cycle. Several rounds of ATP-dependent interactions between DnaJ, DnaK and GrpE are required for fully efficient folding. Also involved, together with DnaK and GrpE, in the DNA replication of plasmids through activation of initiation proteins. In Aquifex aeolicus (strain VF5), this protein is Chaperone protein DnaJ 1.